A 391-amino-acid polypeptide reads, in one-letter code: Alpha-2B adrenergic receptor (391 aa).

The chain crosses the membrane as a helical span at residues 1-25; that stretch reads AIAAVITFLILFTIFGNALVILAVL. At 26–36 the chain is on the cytoplasmic side; sequence TSRSLRAPQNL. A helical transmembrane segment spans residues 37–62; sequence FLVSLAAADILVATLIIPFSLANELL. Over 63 to 72 the chain is Extracellular; that stretch reads GYWYFRRTWC. A disulfide bridge links Cys72 with Cys151. A helical transmembrane segment spans residues 73–95; it reads EVYLALDVLFCTSSIVHLCAISL. The Cytoplasmic portion of the chain corresponds to 96–117; that stretch reads DRYWAVSRALEYNSKRTPRRIK. Residues 118-140 form a helical membrane-spanning segment; that stretch reads CIILTVWLIAAVISLPPLIYKGD. Residues 141–156 are Extracellular-facing; sequence QGPQPRGRPQCKLNQE. Residues 157–180 form a helical membrane-spanning segment; that stretch reads AWYILASSIGSFFAPCLIMILVYL. At 181–355 the chain is on the cytoplasmic side; that stretch reads RIYLIAKRSH…LTREKRFTFV (175 aa). 2 disordered regions span residues 194–218 and 233–312; these read PRAK…APSS and EANR…PLQQ. The span at 233 to 247 shows a compositional bias: basic and acidic residues; it reads EANRHSKSTGEKVEG. Pro residues predominate over residues 256-266; that stretch reads PGVPPSWPPLP. Positions 271-281 are enriched in basic and acidic residues; the sequence is GQEEDIYRASP. A compositionally biased stretch (acidic residues) spans 282–294; sequence EEEAGDDEEEECE. Over residues 295–309 the composition is skewed to low complexity; it reads PQAVPVSPASACSPP. Residues 356-379 form a helical membrane-spanning segment; it reads LAVVIGVFVLCWFPFFFSYSLGAI. The Extracellular segment spans residues 380–388; that stretch reads CPQHCKVPH. Residues 389 to 391 traverse the membrane as a helical segment; that stretch reads GLF.

Belongs to the G-protein coupled receptor 1 family. Adrenergic receptor subfamily. ADRA2B sub-subfamily. In terms of assembly, interacts with RAB26. Interacts with PPP1R9B. Interacts with GGA1, GGA2 and GGA3.

It localises to the cell membrane. Functionally, alpha-2 adrenergic receptors mediate the catecholamine-induced inhibition of adenylate cyclase through the action of G proteins. This chain is Alpha-2B adrenergic receptor (ADRA2B), found in Erinaceus europaeus (Western European hedgehog).